Consider the following 269-residue polypeptide: Achromobactin transport ATP-binding protein CbrD (269 aa).

An ABC transporter domain is found at 4-240 (ITSRELTLGY…ALVKTVFNLD (237 aa)). 36–43 (GSNGCGKS) lines the ATP pocket.

It belongs to the ABC transporter superfamily.

The protein localises to the cell inner membrane. In terms of biological role, part of the binding-protein-dependent transport system CbrABCD for uptake of the siderophore achromobactin. Probably responsible for energy coupling to the transport system. The protein is Achromobactin transport ATP-binding protein CbrD (cbrD) of Dickeya dadantii (strain 3937) (Erwinia chrysanthemi (strain 3937)).